Reading from the N-terminus, the 143-residue chain is MKTIMAKPGQVERKWYVVDAAGKPLGRLSAGIARILMGKHKPIWTPGVDCGDFVIVINAEKVALSGSKELKKVYYDHSGYLGGQRVTPAWQLRQKKPEQLIYRSVKGMLPKNSLGRRQITHLKVYAGPEHPHQAQQPEKIELP.

The protein belongs to the universal ribosomal protein uL13 family. In terms of assembly, part of the 50S ribosomal subunit.

Its function is as follows. This protein is one of the early assembly proteins of the 50S ribosomal subunit, although it is not seen to bind rRNA by itself. It is important during the early stages of 50S assembly. The chain is Large ribosomal subunit protein uL13 from Coprothermobacter proteolyticus (strain ATCC 35245 / DSM 5265 / OCM 4 / BT).